Consider the following 1015-residue polypeptide: Putative helicase mov-10-B.2 (1015 aa).

A disordered region spans residues 94–130 (QWFRPRRRQQNQANATPGNVSSVTPSSDQGPSCPESG). Residues 109–123 (TPGNVSSVTPSSDQG) show a composition bias toward polar residues. Residue 555–562 (GPPGTGKT) coordinates ATP. Residues 677–680 (DEAG) carry the DEAG box motif.

This sequence belongs to the DNA2/NAM7 helicase family. SDE3 subfamily.

The protein localises to the cytoplasm. It is found in the P-body. The enzyme catalyses ATP + H2O = ADP + phosphate + H(+). Its function is as follows. Probable RNA helicase. Required for RNA-mediated gene silencing by the RNA-induced silencing complex (RISC). Required for both miRNA-mediated translational repression and miRNA-mediated cleavage of complementary mRNAs by RISC. The sequence is that of Putative helicase mov-10-B.2 (mov10b.2) from Danio rerio (Zebrafish).